We begin with the raw amino-acid sequence, 932 residues long: Valine--tRNA ligase (932 aa).

Residues 75–85 carry the 'HIGH' region motif; the sequence is PNVTGQLHMGH. A 'KMSKS' region motif is present at residues 568-572; it reads KMSKS. Position 571 (lysine 571) interacts with ATP. A coiled-coil region spans residues 863-929; that stretch reads TVDVAAERKR…ERITARLEGL (67 aa).

The protein belongs to the class-I aminoacyl-tRNA synthetase family. ValS type 1 subfamily. Monomer.

It localises to the cytoplasm. It catalyses the reaction tRNA(Val) + L-valine + ATP = L-valyl-tRNA(Val) + AMP + diphosphate. In terms of biological role, catalyzes the attachment of valine to tRNA(Val). As ValRS can inadvertently accommodate and process structurally similar amino acids such as threonine, to avoid such errors, it has a 'posttransfer' editing activity that hydrolyzes mischarged Thr-tRNA(Val) in a tRNA-dependent manner. The polypeptide is Valine--tRNA ligase (Corynebacterium jeikeium (strain K411)).